Here is a 296-residue protein sequence, read N- to C-terminus: MRIILITGISGSGKSVALNVLEDAGYYCVDNLPAQFIPDLACYLADQGYSQLGVATDIRSRESLARLPDTVRELAANHQVQVLYLTASTDALVQRYSETRRRHPLSAQVDVGAAAGTPNDTSLIEAIEKERELLSPLAESAHRIDTSNVRTNTLRSWIKELIQDENENKNSQQLTLLFESFGFKHGVPSDADLVFDVRSLPNPYYDLALRPLTGRDAPVIDFLQSQPMVLAMAEDIRAYVEKWLPSFIADNRSYLTVTIGCTGGQHRSVFIAERLANYFRAHGNVLVRHRELAPAG.

8-15 (GISGSGKS) is a binding site for ATP. GTP is bound at residue 57–60 (DIRS).

This sequence belongs to the RapZ-like family.

In terms of biological role, displays ATPase and GTPase activities. The polypeptide is Nucleotide-binding protein Rmet_0297 (Cupriavidus metallidurans (strain ATCC 43123 / DSM 2839 / NBRC 102507 / CH34) (Ralstonia metallidurans)).